The chain runs to 260 residues: 3'-5' ssDNA/RNA exonuclease TatD (260 aa).

Residues glutamate 92, histidine 128, and histidine 153 each coordinate a divalent metal cation.

Belongs to the metallo-dependent hydrolases superfamily. TatD-type hydrolase family. TatD subfamily. Monomer. Mg(2+) is required as a cofactor.

The protein localises to the cytoplasm. Its function is as follows. 3'-5' exonuclease that prefers single-stranded DNA and RNA. May play a role in the H(2)O(2)-induced DNA damage repair. This Pectobacterium atrosepticum (strain SCRI 1043 / ATCC BAA-672) (Erwinia carotovora subsp. atroseptica) protein is 3'-5' ssDNA/RNA exonuclease TatD.